The sequence spans 39 residues: Contryphan-Cal2 (39 aa).

The N-terminal stretch at 1–20 (MTRTAVLLLTLLFLVAMAAS) is a signal peptide. Residues cysteine 29 and cysteine 35 are joined by a disulfide bond.

Expressed by the venom duct.

It is found in the secreted. Probable neurotoxin. The chain is Contryphan-Cal2 from Californiconus californicus (California cone).